We begin with the raw amino-acid sequence, 271 residues long: 2-dehydro-3-deoxyphosphooctonate aldolase (271 aa).

It belongs to the KdsA family.

Its subcellular location is the cytoplasm. It catalyses the reaction D-arabinose 5-phosphate + phosphoenolpyruvate + H2O = 3-deoxy-alpha-D-manno-2-octulosonate-8-phosphate + phosphate. The protein operates within carbohydrate biosynthesis; 3-deoxy-D-manno-octulosonate biosynthesis; 3-deoxy-D-manno-octulosonate from D-ribulose 5-phosphate: step 2/3. It participates in bacterial outer membrane biogenesis; lipopolysaccharide biosynthesis. This chain is 2-dehydro-3-deoxyphosphooctonate aldolase, found in Campylobacter jejuni subsp. jejuni serotype O:2 (strain ATCC 700819 / NCTC 11168).